The sequence spans 243 residues: R-spondin-2 (243 aa).

A signal peptide spans 1-21 (MQFQLFSFALIILNCVDYSHC). Intrachain disulfides connect C40–C46, C43–C52, C55–C74, C78–C93, C96–C104, C101–C110, C113–C124, C128–C141, C145–C187, C156–C163, and C196–C203. Residues 90 to 134 (MNRCSRCRIENCDSCFSRDFCIKCKSGFYSLKGQCFEECPEGFAP) form an FU repeat. The TSP type-1 domain maps to 144–204 (GCEVGPWSEW…RCKMAIRHCP (61 aa)). N160 carries an N-linked (GlcNAc...) asparagine glycan. Residues 204-224 (PGGKRTTKKKDKRNKKKKKKL) show a composition bias toward basic residues. A disordered region spans residues 204–243 (PGGKRTTKKKDKRNKKKKKKLLERAQEQHSVVLATDRSSQ).

This sequence belongs to the R-spondin family. As to quaternary structure, binds heparin.

It is found in the secreted. Its function is as follows. Activator of the canonical Wnt signaling pathway by acting as a ligand for lgr4-6 receptors. Upon binding to lgr4-6 (lgr4, lgr5 or lgr6), lgr4-6 associate with phosphorylated lrp6 and frizzled receptors that are activated by extracellular Wnt receptors, triggering the canonical Wnt signaling pathway to increase expression of target genes. Acts both in the canonical Wnt/beta-catenin-dependent pathway and in non-canonical Wnt signaling pathway. Activates neural markers and promotes muscle formation. Overexpression blocks activin, nodal and BMP4 signaling, suggesting that it may negatively regulate the TGF-beta pathway. During embryonic development, plays a crucial role in limb specification, amplifying the Wnt signaling pathway independently of LGR4-6 receptors, possibly by acting as a direct antagonistic ligand to RNF43 and ZNRF3, hence governing the number of limbs an embryo should form. This is R-spondin-2 (rspo2) from Xenopus laevis (African clawed frog).